The following is a 535-amino-acid chain: Light-independent protochlorophyllide reductase subunit B (535 aa).

Residue Asp36 participates in [4Fe-4S] cluster binding. Catalysis depends on Asp292, which acts as the Proton donor. 428-429 (GL) is a substrate binding site. The segment at 446 to 483 (DEASPSESAPHASNGHEDVAGGSTAQSVPSHAATEGDG) is disordered.

This sequence belongs to the ChlB/BchB/BchZ family. Protochlorophyllide reductase is composed of three subunits; BchL, BchN and BchB. Forms a heterotetramer of two BchB and two BchN subunits. It depends on [4Fe-4S] cluster as a cofactor.

It carries out the reaction chlorophyllide a + oxidized 2[4Fe-4S]-[ferredoxin] + 2 ADP + 2 phosphate = protochlorophyllide a + reduced 2[4Fe-4S]-[ferredoxin] + 2 ATP + 2 H2O. It functions in the pathway porphyrin-containing compound metabolism; bacteriochlorophyll biosynthesis (light-independent). Component of the dark-operative protochlorophyllide reductase (DPOR) that uses Mg-ATP and reduced ferredoxin to reduce ring D of protochlorophyllide (Pchlide) to form chlorophyllide a (Chlide). This reaction is light-independent. The NB-protein (BchN-BchB) is the catalytic component of the complex. This chain is Light-independent protochlorophyllide reductase subunit B, found in Chlorobium limicola (strain DSM 245 / NBRC 103803 / 6330).